Reading from the N-terminus, the 303-residue chain is MAKKQWQKIDGIVLLNKPEGVTSNGLLQQVRRVYNAKKAGHTGALDPFATGLLPICLGEATKISGLLLDSDKRYIATLQLGLETDSGDKDGNPLKTIAVPALSKAMLETVFSQFEGDVMQVPPMYSALKHQGKPLYEYARKGIHIERAARPIHIYELKLIDFENTVVRFEVLCSKGTYVRTLGEDIAKALGTVGHLTGLHRTQTGALTGDEMATLEEIELNKDAYLQPLDLPLKHLQAIHLNAKDTDKILHGGKLAVEEPETLLVRFYDPQQRFIGVGEWQQEKQLLKPKRLFNLNPIGDDHS.

Asp46 (nucleophile) is an active-site residue.

This sequence belongs to the pseudouridine synthase TruB family. Type 1 subfamily.

It catalyses the reaction uridine(55) in tRNA = pseudouridine(55) in tRNA. Responsible for synthesis of pseudouridine from uracil-55 in the psi GC loop of transfer RNAs. In Hydrogenovibrio crunogenus (strain DSM 25203 / XCL-2) (Thiomicrospira crunogena), this protein is tRNA pseudouridine synthase B.